The chain runs to 681 residues: Type VI secretion system spike protein VgrG2 (681 aa).

The disordered stretch occupies residues 284–309 (AVAGSGKSNSSALQPGQTFSLTEHPN). A compositionally biased stretch (polar residues) spans 289-309 (GKSNSSALQPGQTFSLTEHPN).

The protein belongs to the VgrG protein family.

Functionally, part of the type VI secretion system specialized secretion system, which delivers several virulence factors in both prokaryotic and eukaryotic cells during infection. Plays an essential role in bacterial mobility and biofilm formation. In Aeromonas hydrophila, this protein is Type VI secretion system spike protein VgrG2.